We begin with the raw amino-acid sequence, 255 residues long: Kallikrein-4 (255 aa).

An N-terminal signal peptide occupies residues 1-25 (MMVTARTPWGWFLGCLILEVTGASA). Positions 26 to 31 (SSVSSR) are excised as a propeptide. The Peptidase S1 domain occupies 32–253 (IIQGQDCSPH…FTNWIQTIIQ (222 aa)). His-41 provides a ligand contact to Zn(2+). A disulfide bridge connects residues Cys-57 and Cys-73. His-72 serves as the catalytic Charge relay system. Glu-92 is a binding site for Zn(2+). Asp-117 acts as the Charge relay system in catalysis. N-linked (GlcNAc...) asparagine glycosylation is found at Asn-124 and Asn-170. Cystine bridges form between Cys-149/Cys-214, Cys-179/Cys-193, and Cys-204/Cys-229. Ser-208 functions as the Charge relay system in the catalytic mechanism.

Belongs to the peptidase S1 family. Kallikrein subfamily. Post-translationally, N-glycosylated. The N-glycan structures are of complex diantennary or triantennary type, which may be further modified with up to 2 sialic acid residues.

It is found in the secreted. In terms of biological role, has a major role in enamel formation. Required during the maturation stage of tooth development for clearance of enamel proteins and normal structural patterning of the crystalline matrix. In Mus musculus (Mouse), this protein is Kallikrein-4.